The chain runs to 339 residues: S-adenosylmethionine:tRNA ribosyltransferase-isomerase (339 aa).

This sequence belongs to the QueA family. As to quaternary structure, monomer.

It localises to the cytoplasm. It catalyses the reaction 7-aminomethyl-7-carbaguanosine(34) in tRNA + S-adenosyl-L-methionine = epoxyqueuosine(34) in tRNA + adenine + L-methionine + 2 H(+). The protein operates within tRNA modification; tRNA-queuosine biosynthesis. Functionally, transfers and isomerizes the ribose moiety from AdoMet to the 7-aminomethyl group of 7-deazaguanine (preQ1-tRNA) to give epoxyqueuosine (oQ-tRNA). The polypeptide is S-adenosylmethionine:tRNA ribosyltransferase-isomerase (Campylobacter fetus subsp. fetus (strain 82-40)).